We begin with the raw amino-acid sequence, 216 residues long: Thymidine kinase (216 aa).

Residues 9–16 and 86–89 contribute to the ATP site; these read GTMDCGKS and DEAQ. Glu-87 (proton acceptor) is an active-site residue.

The protein belongs to the thymidine kinase family. In terms of assembly, homotetramer.

It localises to the cytoplasm. The enzyme catalyses thymidine + ATP = dTMP + ADP + H(+). In Streptomyces avermitilis (strain ATCC 31267 / DSM 46492 / JCM 5070 / NBRC 14893 / NCIMB 12804 / NRRL 8165 / MA-4680), this protein is Thymidine kinase.